Reading from the N-terminus, the 757-residue chain is uncharacterized protein (757 aa).

The region spanning 640-709 (GMILEGVVSN…ARKRIALTMR (70 aa)) is the S1 motif domain. Over residues 711–741 (DDEPGGAKHKMPSENRSRERTAGRKPQRNDR) the composition is skewed to basic and acidic residues. The segment at 711 to 757 (DDEPGGAKHKMPSENRSRERTAGRKPQRNDRAPANSAMADAFAKLKR) is disordered.

This is an uncharacterized protein from Neisseria meningitidis serogroup B (strain ATCC BAA-335 / MC58).